The sequence spans 178 residues: Large ribosomal subunit protein bL17 (178 aa).

It belongs to the bacterial ribosomal protein bL17 family. In terms of assembly, part of the 50S ribosomal subunit. Contacts protein L32.

The sequence is that of Large ribosomal subunit protein bL17 from Lachnospira eligens (strain ATCC 27750 / DSM 3376 / VPI C15-48 / C15-B4) (Eubacterium eligens).